We begin with the raw amino-acid sequence, 557 residues long: Formate--tetrahydrofolate ligase 2 (557 aa).

66–73 contacts ATP; sequence TPAGEGKT.

It belongs to the formate--tetrahydrofolate ligase family.

The enzyme catalyses (6S)-5,6,7,8-tetrahydrofolate + formate + ATP = (6R)-10-formyltetrahydrofolate + ADP + phosphate. Its pathway is one-carbon metabolism; tetrahydrofolate interconversion. The protein is Formate--tetrahydrofolate ligase 2 of Streptococcus pyogenes serotype M28 (strain MGAS6180).